A 702-amino-acid chain; its full sequence is K(+)-insensitive pyrophosphate-energized proton pump (702 aa).

4 helical membrane-spanning segments follow: residues 3–23 (GIYL…ALTI), 63–83 (AVVF…GFLI), 130–150 (MLVA…LVGI), and 162–182 (VALG…GGIF). Lys184 lines the substrate pocket. Mg(2+) contacts are provided by Asp187, Asp191, Asn214, and Asp217. 6 helical membrane passes run 234-254 (AVTV…VPAM), 255-275 (TSMM…SILG), 294-314 (GFLV…AIVP), 329-349 (GFDL…LIWV), 379-399 (GLAI…AAII), and 407-427 (LFGI…VVAL). Mg(2+) is bound at residue Asp435. Transmembrane regions (helical) follow at residues 466 to 486 (AVTK…LFAA), 517 to 537 (YVVV…SMGM), 586 to 606 (IIPS…ILGI), and 612 to 632 (AFSA…FVAI). The Ca(2+) site is built by Asp642, Asp668, and Asp672. Lys675 lines the substrate pocket.

It belongs to the H(+)-translocating pyrophosphatase (TC 3.A.10) family. K(+)-insensitive subfamily. In terms of assembly, homodimer. It depends on Mg(2+) as a cofactor.

Its subcellular location is the cell inner membrane. It catalyses the reaction diphosphate + H2O + H(+)(in) = 2 phosphate + 2 H(+)(out). Functionally, proton pump that utilizes the energy of pyrophosphate hydrolysis as the driving force for proton movement across the membrane. Generates a proton motive force. This Rhodospirillum rubrum (strain ATCC 11170 / ATH 1.1.1 / DSM 467 / LMG 4362 / NCIMB 8255 / S1) protein is K(+)-insensitive pyrophosphate-energized proton pump.